The following is a 464-amino-acid chain: uncharacterized protein (464 aa).

The next 12 membrane-spanning stretches (helical) occupy residues 7–27, 37–57, 94–114, 121–141, 153–173, 196–216, 231–251, 282–302, 329–349, 359–379, 401–421, and 432–452; these read VLNV…LRTL, LVFY…LVAA, VVWY…LIAP, FYLL…NCFG, ASIG…VWIF, LSLF…AVHA, FYSA…IVIV, VIAV…IIGP, VAIL…FILL, LSDL…AAAI, MSLI…VGFI, and FLFE…PWLF.

Belongs to the amino acid-polyamine-organocation (APC) superfamily.

Its subcellular location is the cell membrane. This is an uncharacterized protein from Legionella pneumophila subsp. pneumophila (strain Philadelphia 1 / ATCC 33152 / DSM 7513).